The sequence spans 380 residues: MTIMRKKHPLLKLINHSFIDLPAPSNISSWWNFGSLLGVCLMIQIMTGLFLAMHYTSDTTTAFSSVAHICRDVNYGWLIRYLHANGASMFFICLFIHVGRGIYYGSYMLLETWNIGIILFLTTMATAFVGYVLPXXQMSFWGATVITNLLSAIPYIGNTLLEWIWGGFSVDKATLTRFFAFHFILPFIITALVLVHLLFLHETGSNNPSGLNSNSDKIPFHPYYTIKDLLGVLLLLMVLMILVLFFPDILGDPDNYTPANPLNTPAHIKPEWYFLFAYAILRSIPNKLGGVLALILSILILAAFPFLNSSKQHGLVYRPITQFLYWIFIANLLILTWIGGQPVEYPFTTIGQISSILYFTIIVVLMPVANMIENNILXLH.

Transmembrane regions (helical) follow at residues 33 to 53 (FGSLLGVCLMIQIMTGLFLAM), 77 to 98 (WLIRYLHANGASMFFICLFIHV), 113 to 133 (WNIGIILFLTTMATAFVGYVL), and 178 to 198 (FFAFHFILPFIITALVLVHLL). Residues His83 and His97 each coordinate heme b. Residues His182 and His196 each contribute to the heme b site. Residue His201 coordinates a ubiquinone. Transmembrane regions (helical) follow at residues 226–246 (IKDLLGVLLLLMVLMILVLFF), 288–308 (LGGVLALILSILILAAFPFLN), 320–340 (ITQFLYWIFIANLLILTWIGG), and 347–367 (FTTIGQISSILYFTIIVVLMP).

Belongs to the cytochrome b family. In terms of assembly, the cytochrome bc1 complex contains 11 subunits: 3 respiratory subunits (MT-CYB, CYC1 and UQCRFS1), 2 core proteins (UQCRC1 and UQCRC2) and 6 low-molecular weight proteins (UQCRH/QCR6, UQCRB/QCR7, UQCRQ/QCR8, UQCR10/QCR9, UQCR11/QCR10 and a cleavage product of UQCRFS1). This cytochrome bc1 complex then forms a dimer. It depends on heme b as a cofactor.

It is found in the mitochondrion inner membrane. Component of the ubiquinol-cytochrome c reductase complex (complex III or cytochrome b-c1 complex) that is part of the mitochondrial respiratory chain. The b-c1 complex mediates electron transfer from ubiquinol to cytochrome c. Contributes to the generation of a proton gradient across the mitochondrial membrane that is then used for ATP synthesis. The protein is Cytochrome b (MT-CYB) of Thomasomys ischyrus (Strong-tailed oldfield mouse).